The sequence spans 521 residues: Vang-like protein 2-B (521 aa).

Residues 1–18 (MDNDSQYSGYSYKSGQSR) show a composition bias toward low complexity. Residues 1 to 73 (MDNDSQYSGY…RDDNWGETTT (73 aa)) are disordered. The Cytoplasmic segment spans residues 1 to 108 (MDNDSQYSGY…AKLDCSRHLG (108 aa)). The span at 19-33 (SSRKHRDRRERHRSK) shows a compositional bias: basic residues. Positions 57 to 67 (ESTRGEDRDDN) are enriched in basic and acidic residues. A helical membrane pass occupies residues 109–129 (VVIAGALALLSFLTPIAFMLL). At 130-147 (PQILWREDLEQCGTACEG) the chain is on the extracellular side. The helical transmembrane segment at 148 to 168 (LFISVAFKLLILLLGSWALFF) threads the bilayer. The Cytoplasmic segment spans residues 169–178 (RRPKAFFPRV). The helical transmembrane segment at 179–199 (FVFRALLMVLVFLLVVSYWLF) threads the bilayer. At 200–218 (YGVRILESRDKNYQGIVQY) the chain is on the extracellular side. A helical membrane pass occupies residues 219-239 (AVSLVDALLFVHYLAVVLLEL). Residues 240–521 (RQLQPQFTIK…VMRLQSETSV (282 aa)) lie on the Cytoplasmic side of the membrane. Residues 518–521 (ETSV) carry the PDZ-binding motif.

The protein belongs to the Vang family. Interacts with dvl/dsh. Interacts with prickle3. As to expression, during gastrulation, broadly expressed in the dorsal region in both mesodermal and neural tissues. From the neurula stages, expressed throughout the neural tube. In tailbud stages, expression declines in the anterior notochord but remains strong in the posterior notochord and in the neural tube. Also weakly expressed in the prenephritic region of late tailbud embryos.

The protein localises to the cell membrane. Has a role in non-canonical Wnt/planar cell polarity (PCP) signaling; can recruit dvl/dsh and prickle from the cytoplasm to the plasma membrane. Acts in a PCP complex to regulate the polarized assembly of fibronectrin on the surface of the mesoderm during gastrulation. Regulates convergent extension in both dorsal mesoderm and neural tissue without affecting cell fate. Regulates neural fold closure during neurulation. May be required for cell surface localization of fzd3 and fzd6 in the inner ear. The chain is Vang-like protein 2-B (vangl2-b) from Xenopus laevis (African clawed frog).